The following is a 198-amino-acid chain: Protein GrpE (198 aa).

The segment covering 1 to 18 has biased composition (basic and acidic residues); sequence MSEQEQKVEIPEVEKQEE. The tract at residues 1–33 is disordered; it reads MSEQEQKVEIPEVEKQEEVVVEETQQAEHSQEF.

It belongs to the GrpE family. As to quaternary structure, homodimer.

It localises to the cytoplasm. In terms of biological role, participates actively in the response to hyperosmotic and heat shock by preventing the aggregation of stress-denatured proteins, in association with DnaK and GrpE. It is the nucleotide exchange factor for DnaK and may function as a thermosensor. Unfolded proteins bind initially to DnaJ; upon interaction with the DnaJ-bound protein, DnaK hydrolyzes its bound ATP, resulting in the formation of a stable complex. GrpE releases ADP from DnaK; ATP binding to DnaK triggers the release of the substrate protein, thus completing the reaction cycle. Several rounds of ATP-dependent interactions between DnaJ, DnaK and GrpE are required for fully efficient folding. This Haemophilus influenzae (strain ATCC 51907 / DSM 11121 / KW20 / Rd) protein is Protein GrpE.